Consider the following 59-residue polypeptide: Small, acid-soluble spore protein H (59 aa).

It belongs to the SspH family.

It is found in the spore core. The chain is Small, acid-soluble spore protein H from Bacillus thuringiensis subsp. konkukian (strain 97-27).